Consider the following 247-residue polypeptide: 2,3-bisphosphoglycerate-dependent phosphoglycerate mutase (247 aa).

Residues 8 to 15 (RHGESTWN), 21 to 22 (TG), Arg60, 87 to 90 (ERHY), Lys98, 114 to 115 (RR), and 183 to 184 (GN) contribute to the substrate site. His9 (tele-phosphohistidine intermediate) is an active-site residue. Glu87 (proton donor/acceptor) is an active-site residue.

This sequence belongs to the phosphoglycerate mutase family. BPG-dependent PGAM subfamily. Homodimer.

It carries out the reaction (2R)-2-phosphoglycerate = (2R)-3-phosphoglycerate. Its pathway is carbohydrate degradation; glycolysis; pyruvate from D-glyceraldehyde 3-phosphate: step 3/5. Its function is as follows. Catalyzes the interconversion of 2-phosphoglycerate and 3-phosphoglycerate. This Paracidovorax citrulli (strain AAC00-1) (Acidovorax citrulli) protein is 2,3-bisphosphoglycerate-dependent phosphoglycerate mutase.